The chain runs to 118 residues: Holo-[acyl-carrier-protein] synthase (118 aa).

Mg(2+) is bound by residues Asp8 and Glu58.

It belongs to the P-Pant transferase superfamily. AcpS family. The cofactor is Mg(2+).

Its subcellular location is the cytoplasm. It carries out the reaction apo-[ACP] + CoA = holo-[ACP] + adenosine 3',5'-bisphosphate + H(+). Its function is as follows. Transfers the 4'-phosphopantetheine moiety from coenzyme A to a Ser of acyl-carrier-protein. The protein is Holo-[acyl-carrier-protein] synthase of Listeria welshimeri serovar 6b (strain ATCC 35897 / DSM 20650 / CCUG 15529 / CIP 8149 / NCTC 11857 / SLCC 5334 / V8).